The following is a 404-amino-acid chain: MSNPSLSSKLLGGNLVLRIAIGLVLGACLALVNPDWAKNVGVLGQFFVKSLRAIAPILVFVLVLSAIANKEVGSDSKLKPILVMYVLGTFVAALTAVVLSFMFPTTLELVSNPDNLNPPQGIGEIIKTVVFNLVDNPLQALANANFIGILAWAIGLGIALRHAAPSTKTFLNDFAEAVSFVVKVVIAFAPIGVFGLVAETIATNGADAFVGYARLLGVLLGAMVIVAFVLNPLIVFWKIRRNPYPLTLTCLRESGVTAFFTRSSAANIPVNMNLAKRLGVRDEIASVAIPLGATINMAGAAITVTVLTLAAAYTQGIQPDFATALLLSIVASVCACGASGVAGGSLLLIPLACSLFNIPNDIAAQVIGVGFIIGVIQDSAETALNSSTDVLFTAAVSQAEDQKA.

Helical transmembrane passes span 12–32 (GGNLVLRIAIGLVLGACLALV), 53–73 (AIAPILVFVLVLSAIANKEVG), 81–101 (ILVMYVLGTFVAALTAVVLSF), 140–160 (ALANANFIGILAWAIGLGIAL), 177–197 (AVSFVVKVVIAFAPIGVFGLV), 216–236 (LGVLLGAMVIVAFVLNPLIVF), 287–307 (VAIPLGATINMAGAAITVTVL), 329–349 (IVASVCACGASGVAGGSLLLI), and 356–376 (FNIPNDIAAQVIGVGFIIGVI).

The protein belongs to the dicarboxylate/amino acid:cation symporter (DAACS) (TC 2.A.23) family.

It localises to the cell inner membrane. The catalysed reaction is L-serine(in) + Na(+)(in) = L-serine(out) + Na(+)(out). It catalyses the reaction L-threonine(in) + Na(+)(in) = L-threonine(out) + Na(+)(out). Functionally, involved in the import of serine and threonine into the cell, with the concomitant import of sodium (symport system). This is Serine/threonine transporter SstT from Actinobacillus pleuropneumoniae serotype 7 (strain AP76).